We begin with the raw amino-acid sequence, 141 residues long: Protein C19orf12 homolog (141 aa).

A helical membrane pass occupies residues 37–57; the sequence is GLAFAGGLIGGPLGIAVGGAV.

This sequence belongs to the C19orf12 family.

It is found in the mitochondrion. The protein localises to the mitochondrion membrane. The protein resides in the endoplasmic reticulum. Its subcellular location is the cytoplasm. It localises to the cytosol. This chain is Protein C19orf12 homolog, found in Danio rerio (Zebrafish).